The primary structure comprises 362 residues: MINNPKVDSVAEKPKAVTSKQSEQAASPEPTPAPPVSRNQYPITFNLTSTAPFHLHDRHRYLQEQDLYKCASRDSLSSLQQLAHTPNGSTRKKYIVEDQSPYSSENPVIVTSSYNHTVCTNYLRPRMQFTGYQISGYKRYQVTVNLKTVDLPKKDCTSLSPHLSGFLSIRGLTNQHPEISTYFEAYAVNHKELGFLSSSWKDEPVLNEFKATDQTDLEHWINFPSFRQLFLMSQKNGLNSTDDNGTTNAAKKLPPQQLPTTPSADAGNISRIFSQEKQFDNYLNERFIFMKWKEKFLVPDALLMEGVDGASYDGFYYIVHDQVTGNIQGFYYHQDAEKFQQLELVPSLKNKVESSDCSFEFA.

Disordered regions lie at residues 1–40 (MINN…SRNQ) and 240–267 (STDD…ADAG). Lysine 20 is covalently cross-linked (Glycyl lysine isopeptide (Lys-Gly) (interchain with G-Cter in ubiquitin)). At serine 27 the chain carries Phosphoserine. A compositionally biased stretch (polar residues) spans 240–249 (STDDNGTTNA).

The protein belongs to the GID4/VID24 family. Substrate-recognition component of the GID/CTLH ubiquitin ligase complex. In the absence of stress, the complex exists as an inactive anticipatory complex (GID(Ant)), composed of VID30/GID1, the E3 ubiquitin-ligase RMD5/GID2, VID28/GID5, GID8, and the RING-like subunit FYV10/GID9, awaiting a substrate receptor to form the active E3 ligase complex. When cells are shifted to glucose-containing medium, the substrate receptor VID24/GID4 is induced and becomes part of the complex, named GID(SR4). Additionally, GID7 transforms the GID(SR4) E3 ligase core into a higher-order supramolecular assembly (Chelator-GID(SR4)) specifically tailored for FBP1 ubiquitination. Under osmotic or heat stress, the substrate receptor GID10 is induced and becomes part of the complex, named GID(SR10). Within the complex, VVID24/GID4 is recruited to the complex via interaction with VID28/GID5. Interacts with proteins that have an N-terminal Pro/N-degron, including FBP1, ICL1 and MDH2. Ubiquitinated by the GID complex, leading to subsequent proteasomal degradation.

It is found in the cytoplasmic vesicle membrane. Functionally, substrate-recognition component of the GID E3 ligase complex recruiting N termini and catalyzing ubiquitination of proteins targeted for degradation. GID E3 is regulated through assembly with interchangeable N-degron-binding substrate receptors induced by distinct environmental perturbations. Required for the adaptation to the presence of glucose in the growth medium; mediates the degradation of enzymes involved in gluconeogenesis when cells are shifted to glucose-containing medium. Required for proteasome-dependent catabolite degradation of fructose-1,6-bisphosphatase (FBP1), malate dehydrogenase (MDH2), and other gluconeogenic enzymes, probably by targeting FBP1-containing vesicles to the vacuole, but is not required for FBP1 sequestration in cytoplasmic vesicles. Specific for substrates with an N-terminal Pro (Pro/N-degron), including FBP1, ICL1 and MDH2. Has high affinity for the N-terminal sequence Pro-Thr-Leu-Val, and can bind peptides with an N-terminal sequence of the type Pro-[Gly,Ala,Ser,Thr,Asp,Asn,Tyr,His]-[Ala,Val,Leu,Ile,Lys,Arg]-[Val,Cys,Pro,Leu,Ile,Trp]. Also recognizes nonproline N-terminal residues and targets an Ile-Gly-Lys-Trp-bearing protein for rapid degradation. This Saccharomyces cerevisiae (strain ATCC 204508 / S288c) (Baker's yeast) protein is GID complex substrate-recognition subunit 4.